Consider the following 328-residue polypeptide: MTDTRKPPRKKPQRPAKPAAPREKATLHPRNRHQGHYDFAKLIKSSPELAAFVILNPYGKESIDFADPQAVRVFNRALLKAFYGIAHWDIPADYLCPPIPGRADYLHFLADLLAEDNEGVIPRGASIKALDIGTGANCIYPLLGHSDYGWQFVGSDIDSTAIAAATTIIKANGLSKAISVRQQDNRKQILLGLLDSSERFHVSLCNPPFHASLDEAQRGSQRKWRALGKADPKRKLPVLNFGGQSQELWCEGGEIGFVTRLIQESATLPSQVVWFSTLVSKASNLPPIQNALKKAGALEVKVIEMGQGQKQSRFVAWTFLDKAQRTPH.

The interval 1-31 is disordered; sequence MTDTRKPPRKKPQRPAKPAAPREKATLHPRN.

This sequence belongs to the methyltransferase superfamily. METTL16/RlmF family.

The protein resides in the cytoplasm. The enzyme catalyses adenosine(1618) in 23S rRNA + S-adenosyl-L-methionine = N(6)-methyladenosine(1618) in 23S rRNA + S-adenosyl-L-homocysteine + H(+). In terms of biological role, specifically methylates the adenine in position 1618 of 23S rRNA. The polypeptide is Ribosomal RNA large subunit methyltransferase F (Pseudomonas savastanoi pv. phaseolicola (strain 1448A / Race 6) (Pseudomonas syringae pv. phaseolicola (strain 1448A / Race 6))).